Here is a 65-residue protein sequence, read N- to C-terminus: Small ribosomal subunit protein bS21 (65 aa).

Over residues 33 to 42 (RRREHYEKPS) the composition is skewed to basic and acidic residues. Positions 33-65 (RRREHYEKPSVKRKRKEAARLRKLQKMAREANN) are disordered. Residues 43 to 58 (VKRKRKEAARLRKLQK) show a composition bias toward basic residues.

Belongs to the bacterial ribosomal protein bS21 family.

This is Small ribosomal subunit protein bS21 from Herpetosiphon aurantiacus (strain ATCC 23779 / DSM 785 / 114-95).